Reading from the N-terminus, the 570-residue chain is Putative ABC transporter ATP-binding protein SACOL2708 (570 aa).

ABC transporter domains are found at residues 6 to 247 (ISFK…GIRE) and 304 to 537 (LELN…ASLR). Residues 40-47 (GASGSGKS) and 338-345 (GHNGAGKS) contribute to the ATP site.

This sequence belongs to the ABC transporter superfamily.

It is found in the cell membrane. In terms of biological role, probably part of an ABC transporter complex. Responsible for energy coupling to the transport system. The chain is Putative ABC transporter ATP-binding protein SACOL2708 from Staphylococcus aureus (strain COL).